The sequence spans 753 residues: Small G protein signaling modulator 3 homolog (753 aa).

A Rab-GAP TBC domain is found at 115 to 306 (GIPHSMRPQL…RIWDFFFYQG (192 aa)). In terms of domain architecture, SH3 spans 482 to 541 (SRRRRAKALLDFERHDDDELGFRKNDIITIISQKDEHCWVGELNGLRGWFPAKFVDILDE). The RUN domain maps to 557-720 (GITDLIRGTL…FAFSLSPDWE (164 aa)).

Belongs to the small G protein signaling modulator family.

The protein is Small G protein signaling modulator 3 homolog (sgsm3) of Xenopus laevis (African clawed frog).